A 384-amino-acid chain; its full sequence is UDP-galactopyranose mutase (384 aa).

A signal peptide spans 1-23 (MKSKKILIVGAGFSGAVIGRQLA). FAD contacts are provided by residues S14, 33–34 (DQ), N41, and 60–61 (HI). UDP-alpha-D-galactose-binding residues include N84, F151, T156, W160, and Y185. An FAD-binding site is contributed by F219. Residues N270, R280, and Y314 each coordinate UDP-alpha-D-galactose. R343 contacts FAD. Y349 is a UDP-alpha-D-galactose binding site. 350-355 (LDMDVT) is a binding site for FAD.

Belongs to the UDP-galactopyranose/dTDP-fucopyranose mutase family. Homodimer. FAD serves as cofactor.

The catalysed reaction is UDP-alpha-D-galactose = UDP-alpha-D-galactofuranose. It participates in bacterial outer membrane biogenesis; LPS O-antigen biosynthesis. Functionally, involved in the biosynthesis of the galactose-containing O-side-chain polysaccharide backbone structure of D-galactan I which is a key component of lipopolysaccharide (LPS). Catalyzes the interconversion through a 2-keto intermediate of uridine diphosphogalactopyranose (UDP-GalP) into uridine diphosphogalactofuranose (UDP-GalF) which is the biosynthetic precursor of galactofuranosyl residues. In Klebsiella pneumoniae, this protein is UDP-galactopyranose mutase (rfbD).